The following is a 254-amino-acid chain: MRIDLNCDIGESFGAYRIGCDAEMIAIASSVNIACGFHGGDPDVMAVTVERALQSGVAIGAHPGFPDLAGFGRREMRLRPSEVTNLIIYQIGALQAFVQAAGGRLHHVKPHGALYNMAAVDDELAAAVALAVKRVDPQLVLYALAGSCLVETAKRLGLTVAQEAFVDRAYRSDGTLAPRNLAGAVITDPETAGTRAVAMVKTGCIPSMDGDLIRIDADTLCLHGDNPGAAAIAKAVRASLETAGIAVKAGFERT.

It belongs to the LamB/PxpA family. As to quaternary structure, forms a complex composed of PxpA, PxpB and PxpC.

The catalysed reaction is 5-oxo-L-proline + ATP + 2 H2O = L-glutamate + ADP + phosphate + H(+). In terms of biological role, catalyzes the cleavage of 5-oxoproline to form L-glutamate coupled to the hydrolysis of ATP to ADP and inorganic phosphate. The sequence is that of 5-oxoprolinase subunit A from Heliobacterium modesticaldum (strain ATCC 51547 / Ice1).